Consider the following 252-residue polypeptide: UPF0714 protein YndL (252 aa).

The helical transmembrane segment at 33–51 (IVKLLMIFMVFTPISSIYA) threads the bilayer.

Belongs to the UPF0714 family.

The protein resides in the cell membrane. The sequence is that of UPF0714 protein YndL (yndL) from Bacillus subtilis (strain 168).